A 663-amino-acid chain; its full sequence is Probable serine/threonine-protein kinase DDB_G0283301 (663 aa).

The region spanning 312-586 is the Protein kinase domain; that stretch reads IERRNELGRG…EECVERLITL (275 aa). Residues 318-326 and Lys-348 contribute to the ATP site; that span reads LGRGGNGTV. Catalysis depends on Asp-440, which acts as the Proton acceptor.

The protein belongs to the protein kinase superfamily. Ser/Thr protein kinase family.

It carries out the reaction L-seryl-[protein] + ATP = O-phospho-L-seryl-[protein] + ADP + H(+). The enzyme catalyses L-threonyl-[protein] + ATP = O-phospho-L-threonyl-[protein] + ADP + H(+). This chain is Probable serine/threonine-protein kinase DDB_G0283301, found in Dictyostelium discoideum (Social amoeba).